A 62-amino-acid chain; its full sequence is DNA-directed RNA polymerase subunit Rpo10 (62 aa).

Zn(2+) contacts are provided by Cys-6, Cys-9, Cys-43, and Cys-44.

Belongs to the archaeal Rpo10/eukaryotic RPB10 RNA polymerase subunit family. Part of the RNA polymerase complex. Zn(2+) is required as a cofactor.

The protein localises to the cytoplasm. It carries out the reaction RNA(n) + a ribonucleoside 5'-triphosphate = RNA(n+1) + diphosphate. Its function is as follows. DNA-dependent RNA polymerase (RNAP) catalyzes the transcription of DNA into RNA using the four ribonucleoside triphosphates as substrates. The sequence is that of DNA-directed RNA polymerase subunit Rpo10 from Methanoculleus marisnigri (strain ATCC 35101 / DSM 1498 / JR1).